The chain runs to 451 residues: Phosphoglucosamine mutase (451 aa).

The active-site Phosphoserine intermediate is the Ser-107. The Mg(2+) site is built by Ser-107, Asp-246, Asp-248, and Asp-250. Ser-107 is subject to Phosphoserine.

It belongs to the phosphohexose mutase family. Mg(2+) serves as cofactor. In terms of processing, activated by phosphorylation.

It catalyses the reaction alpha-D-glucosamine 1-phosphate = D-glucosamine 6-phosphate. Catalyzes the conversion of glucosamine-6-phosphate to glucosamine-1-phosphate. This is Phosphoglucosamine mutase from Burkholderia lata (strain ATCC 17760 / DSM 23089 / LMG 22485 / NCIMB 9086 / R18194 / 383).